The following is a 431-amino-acid chain: Glutamate-1-semialdehyde 2,1-aminomutase (431 aa).

Lys270 bears the N6-(pyridoxal phosphate)lysine mark.

Belongs to the class-III pyridoxal-phosphate-dependent aminotransferase family. HemL subfamily. In terms of assembly, homodimer. It depends on pyridoxal 5'-phosphate as a cofactor.

Its subcellular location is the cytoplasm. It carries out the reaction (S)-4-amino-5-oxopentanoate = 5-aminolevulinate. It participates in porphyrin-containing compound metabolism; protoporphyrin-IX biosynthesis; 5-aminolevulinate from L-glutamyl-tRNA(Glu): step 2/2. This is Glutamate-1-semialdehyde 2,1-aminomutase from Limosilactobacillus reuteri subsp. reuteri (strain JCM 1112) (Lactobacillus reuteri).